Reading from the N-terminus, the 238-residue chain is Probable 2-phosphosulfolactate phosphatase (238 aa).

Belongs to the ComB family. Mg(2+) serves as cofactor.

It carries out the reaction (2R)-O-phospho-3-sulfolactate + H2O = (2R)-3-sulfolactate + phosphate. The protein is Probable 2-phosphosulfolactate phosphatase of Carboxydothermus hydrogenoformans (strain ATCC BAA-161 / DSM 6008 / Z-2901).